Consider the following 403-residue polypeptide: Acetate kinase (403 aa).

Mg(2+) is bound at residue Asn-13. Residue Lys-20 participates in ATP binding. Arg-94 serves as a coordination point for substrate. The active-site Proton donor/acceptor is the Asp-153. ATP-binding positions include 213-217 (HLGNG), 288-290 (DFR), and 336-340 (GIGEN). Glu-390 is a Mg(2+) binding site.

The protein belongs to the acetokinase family. Homodimer. Requires Mg(2+) as cofactor. Mn(2+) is required as a cofactor.

It is found in the cytoplasm. The catalysed reaction is acetate + ATP = acetyl phosphate + ADP. Its pathway is metabolic intermediate biosynthesis; acetyl-CoA biosynthesis; acetyl-CoA from acetate: step 1/2. In terms of biological role, catalyzes the formation of acetyl phosphate from acetate and ATP. Can also catalyze the reverse reaction. This chain is Acetate kinase, found in Buchnera aphidicola subsp. Schizaphis graminum (strain Sg).